The following is a 120-amino-acid chain: Ribosome-binding factor A (120 aa).

It belongs to the RbfA family. As to quaternary structure, monomer. Binds 30S ribosomal subunits, but not 50S ribosomal subunits or 70S ribosomes.

The protein resides in the cytoplasm. In terms of biological role, one of several proteins that assist in the late maturation steps of the functional core of the 30S ribosomal subunit. Associates with free 30S ribosomal subunits (but not with 30S subunits that are part of 70S ribosomes or polysomes). Required for efficient processing of 16S rRNA. May interact with the 5'-terminal helix region of 16S rRNA. This Rickettsia peacockii (strain Rustic) protein is Ribosome-binding factor A.